The chain runs to 254 residues: Ciliary microtubule associated protein 1A (254 aa).

STPGR repeat units follow at residues 180-205 and 216-241; these read PGPAAYRQTDVQVTKFKAPQYTMAAR and PGPGAHSPEKVTMTRPCAPVVSFGIK. Positions 207-226 are disordered; sequence EPPGDKTLKPGPGAHSPEKV.

This sequence belongs to the CIMAP family. In terms of assembly, microtubule inner protein component of sperm flagellar doublet microtubules.

Its subcellular location is the cytoplasm. The protein resides in the cytoskeleton. The protein localises to the flagellum axoneme. In terms of biological role, outer dense fibers are filamentous structures located on the outside of the axoneme in the midpiece and principal piece of the mammalian sperm tail. May help to maintain the passive elastic structures and elastic recoil of the sperm tail. This Bos taurus (Bovine) protein is Ciliary microtubule associated protein 1A (CIMAP1A).